The primary structure comprises 240 residues: Nudix hydrolase 3 (240 aa).

One can recognise a Nudix hydrolase domain in the interval 50-190; it reads NSAMSVLIPL…RMKYTLPSFD (141 aa). The short motif at 89–110 is the Nudix box element; sequence GRMDPGETTTETALRETFEEIG. 2 residues coordinate Mg(2+): Glu104 and Glu108.

It belongs to the Nudix hydrolase family. PCD1 subfamily. Mn(2+) serves as cofactor. Requires Mg(2+) as cofactor.

Probably mediates the hydrolysis of some nucleoside diphosphate derivatives. The chain is Nudix hydrolase 3 (ndx-3) from Caenorhabditis elegans.